The chain runs to 764 residues: Bifunctional type I diterpene synthase tndC (764 aa).

The terpene cyclase stretch occupies residues 1-324 (MEYRYSTVVD…CPRYHPWSSY (324 aa)). Residues Asp-92 and Asp-96 each contribute to the Mg(2+) site. Residues 92–96 (DDVTD) carry the DDXXD 1 motif. The NSE/DTE signature appears at 224-232 (NDLYSWQKE). The segment at 325 to 761 (NERQLDWMKN…FQLRLILEML (437 aa)) is prenyltransferase. Residues 377-403 (AVNGNGASHTSSIKGSTGGNGVTHSPV) form a disordered region. Positions 381-391 (NGASHTSSIKG) are enriched in polar residues. Residues Lys-484, Arg-487, and His-516 each contribute to the isopentenyl diphosphate site. Mg(2+)-binding residues include Asp-523 and Asp-527. The short motif at 523 to 527 (DDLED) is the DDXXD 2 element. Arg-532 is a dimethylallyl diphosphate binding site. Isopentenyl diphosphate is bound at residue Arg-533. Dimethylallyl diphosphate is bound by residues Lys-610, Thr-611, Gln-646, Asn-653, Lys-663, and Lys-673.

In the N-terminal section; belongs to the terpene synthase family. The protein in the C-terminal section; belongs to the FPP/GGPP synthase family.

The catalysed reaction is isopentenyl diphosphate + (2E,6E)-farnesyl diphosphate = (2E,6E,10E)-geranylgeranyl diphosphate + diphosphate. It catalyses the reaction (2E,6E,10E)-geranylgeranyl diphosphate = talarodiene + diphosphate. It participates in secondary metabolite biosynthesis; terpenoid biosynthesis. Its function is as follows. Bifunctional type I diterpene synthase; part of the gene cluster that mediates the biosynthesis of talaronoid C, a fusicoccane diterpenoid with an unprecedented tricyclic 5/8/6 ring system. The first step in the pathway is performed by the fusicoccadiene synthase tndC that possesses both prenyl transferase and terpene cyclase activity, converting isopentenyl diphosphate and dimethylallyl diphosphate into geranylgeranyl diphosphate (GGDP) and further converting GGDP into talarodiene, a precursor for talaronoid C. The remaining enzymes from the cluster include the cytochrome P450 monooxygenase tndB, the aldehyde reductase tndE and the alcohol dehydrogenase tndF that are involved in the conversion of talarodiene into talaronoid C. The protein is Bifunctional type I diterpene synthase tndC of Aspergillus flavipes.